The following is a 425-amino-acid chain: Serine--tRNA ligase (425 aa).

Thr228–Glu230 is an L-serine binding site. Arg259–Glu261 provides a ligand contact to ATP. Position 282 (Glu282) interacts with L-serine. Residue Glu346–Ser349 coordinates ATP. Residue Ser382 participates in L-serine binding.

This sequence belongs to the class-II aminoacyl-tRNA synthetase family. Type-1 seryl-tRNA synthetase subfamily. Homodimer. The tRNA molecule binds across the dimer.

It is found in the cytoplasm. The catalysed reaction is tRNA(Ser) + L-serine + ATP = L-seryl-tRNA(Ser) + AMP + diphosphate + H(+). It carries out the reaction tRNA(Sec) + L-serine + ATP = L-seryl-tRNA(Sec) + AMP + diphosphate + H(+). Its pathway is aminoacyl-tRNA biosynthesis; selenocysteinyl-tRNA(Sec) biosynthesis; L-seryl-tRNA(Sec) from L-serine and tRNA(Sec): step 1/1. Functionally, catalyzes the attachment of serine to tRNA(Ser). Is also able to aminoacylate tRNA(Sec) with serine, to form the misacylated tRNA L-seryl-tRNA(Sec), which will be further converted into selenocysteinyl-tRNA(Sec). This Rickettsia peacockii (strain Rustic) protein is Serine--tRNA ligase.